Reading from the N-terminus, the 192-residue chain is MEFLVEKIGMSRTISVPSTPVTLLKVKDAKVCEVLGNGKALVAYAQGKDANKAIEGQQKKYNLSKEFNRFATLEVANGEAGDQDVAPLAQAVRVKVSLQTKGRGFTGVMKRWNFAGGPAAHGHRFKRRTGSIGNREWPGRVQPGKKMAGQYGNEKVTVQNEIVSFDAENKILVLKGSIPGFNGAFGRIKVVK.

The protein belongs to the universal ribosomal protein uL3 family. As to quaternary structure, part of the 50S ribosomal subunit. Forms a cluster with proteins L14 and L19.

One of the primary rRNA binding proteins, it binds directly near the 3'-end of the 23S rRNA, where it nucleates assembly of the 50S subunit. The polypeptide is Large ribosomal subunit protein uL3 (rplC) (Wolinella succinogenes (strain ATCC 29543 / DSM 1740 / CCUG 13145 / JCM 31913 / LMG 7466 / NCTC 11488 / FDC 602W) (Vibrio succinogenes)).